A 161-amino-acid chain; its full sequence is MAAKATSEKGFKTITDNRRARHEYHVIETYEAGIALSGTEVKSLRAGKANLQDAFARVENGEMMLYNLHISPYEQGNRFNHEPKRTRRLLMHKQEILRLYGKVREKGLALIPLKVYFNPRGKVKVQLALAQGKKSYDKRHDIAARDAKRDMDRAMRERQKM.

Belongs to the SmpB family.

It localises to the cytoplasm. Required for rescue of stalled ribosomes mediated by trans-translation. Binds to transfer-messenger RNA (tmRNA), required for stable association of tmRNA with ribosomes. tmRNA and SmpB together mimic tRNA shape, replacing the anticodon stem-loop with SmpB. tmRNA is encoded by the ssrA gene; the 2 termini fold to resemble tRNA(Ala) and it encodes a 'tag peptide', a short internal open reading frame. During trans-translation Ala-aminoacylated tmRNA acts like a tRNA, entering the A-site of stalled ribosomes, displacing the stalled mRNA. The ribosome then switches to translate the ORF on the tmRNA; the nascent peptide is terminated with the 'tag peptide' encoded by the tmRNA and targeted for degradation. The ribosome is freed to recommence translation, which seems to be the essential function of trans-translation. This is SsrA-binding protein from Desulforamulus reducens (strain ATCC BAA-1160 / DSM 100696 / MI-1) (Desulfotomaculum reducens).